The sequence spans 84 residues: Small ribosomal subunit protein bS16 (84 aa).

This sequence belongs to the bacterial ribosomal protein bS16 family.

The protein is Small ribosomal subunit protein bS16 of Cupriavidus necator (strain ATCC 17699 / DSM 428 / KCTC 22496 / NCIMB 10442 / H16 / Stanier 337) (Ralstonia eutropha).